The sequence spans 449 residues: 3-phosphoshikimate 1-carboxyvinyltransferase (449 aa).

Residues K28, S29, and R33 each coordinate 3-phosphoshikimate. Phosphoenolpyruvate is bound at residue K28. The phosphoenolpyruvate site is built by G105 and R133. 4 residues coordinate 3-phosphoshikimate: S179, Q181, D332, and K359. Residue Q181 participates in phosphoenolpyruvate binding. Residue D332 is the Proton acceptor of the active site. Phosphoenolpyruvate contacts are provided by R363 and R406.

This sequence belongs to the EPSP synthase family. In terms of assembly, monomer.

Its subcellular location is the cytoplasm. The enzyme catalyses 3-phosphoshikimate + phosphoenolpyruvate = 5-O-(1-carboxyvinyl)-3-phosphoshikimate + phosphate. It functions in the pathway metabolic intermediate biosynthesis; chorismate biosynthesis; chorismate from D-erythrose 4-phosphate and phosphoenolpyruvate: step 6/7. In terms of biological role, catalyzes the transfer of the enolpyruvyl moiety of phosphoenolpyruvate (PEP) to the 5-hydroxyl of shikimate-3-phosphate (S3P) to produce enolpyruvyl shikimate-3-phosphate and inorganic phosphate. This is 3-phosphoshikimate 1-carboxyvinyltransferase from Nitrobacter hamburgensis (strain DSM 10229 / NCIMB 13809 / X14).